A 534-amino-acid polypeptide reads, in one-letter code: NAD(P)H-quinone oxidoreductase chain 4 (534 aa).

14 helical membrane passes run 6 to 26, 38 to 58, 91 to 111, 117 to 137, 138 to 158, 171 to 191, 214 to 234, 245 to 265, 279 to 299, 316 to 336, 337 to 357, 377 to 399, 419 to 439, and 466 to 486; these read FPWLSTLIFFPIMATVALPFI, WYALVIGLIDFVLLIYAFYTQ, MPLILLTGFITSLAILASWPV, LFYFLILAMYGGQIAVFAVQD, LLVFFLVWELELVPVYLLLSI, FILYTAISSLFILVAALAMAF, LLCYTGFLVAFAVKLPIVPLH, TAPVHMLLAGILLKMGGYALI, FAPALIILGVVNIIYAALTSF, MGFVLIGIASFTDLGMSGAVL, QMVSHGLIGASLFFLVGATYD, IFAMFTTCSMASLALPGMSGFVA, VPVVILAGIGVILTPIYLLSM, and IFVIACLLVPIIGIGLYPKII.

The protein belongs to the complex I subunit 4 family.

Its subcellular location is the cellular thylakoid membrane. The catalysed reaction is a plastoquinone + NADH + (n+1) H(+)(in) = a plastoquinol + NAD(+) + n H(+)(out). It catalyses the reaction a plastoquinone + NADPH + (n+1) H(+)(in) = a plastoquinol + NADP(+) + n H(+)(out). Its function is as follows. NDH-1 shuttles electrons from NAD(P)H, via FMN and iron-sulfur (Fe-S) centers, to quinones in the respiratory chain. The immediate electron acceptor for the enzyme in this species is believed to be plastoquinone. Couples the redox reaction to proton translocation (for every two electrons transferred, four hydrogen ions are translocated across the cytoplasmic membrane), and thus conserves the redox energy in a proton gradient. This is NAD(P)H-quinone oxidoreductase chain 4 from Acaryochloris marina (strain MBIC 11017).